The chain runs to 255 residues: Acetylglutamate kinase (255 aa).

Substrate is bound by residues Gly-40 to Gly-41, Arg-62, and Asn-153.

Belongs to the acetylglutamate kinase family. ArgB subfamily.

It is found in the cytoplasm. It catalyses the reaction N-acetyl-L-glutamate + ATP = N-acetyl-L-glutamyl 5-phosphate + ADP. Its pathway is amino-acid biosynthesis; L-arginine biosynthesis; N(2)-acetyl-L-ornithine from L-glutamate: step 2/4. Functionally, catalyzes the ATP-dependent phosphorylation of N-acetyl-L-glutamate. The protein is Acetylglutamate kinase of Bacillus cereus (strain G9842).